The following is an 899-amino-acid chain: CNK3/IPCEF1 fusion protein (899 aa).

Residues 7–72 (WSPKQVVDWT…LEAVDLLCAL (66 aa)) enclose the SAM domain. A CRIC domain is found at 80–174 (NMKNLVLKLR…TTVQKDCFVA (95 aa)). One can recognise a PDZ domain in the interval 211–293 (EVHLPNIKPG…GVVLLLKKRP (83 aa)). Disordered stretches follow at residues 309 to 334 (WKPPLVQTSPPPATTQSPESTMDTSL) and 347 to 390 (PPPP…FLDQ). The 126-residue stretch at 332–457 (TSLKKEKSAI…ARPRGHGRKA (126 aa)) folds into the DUF1170 domain. Position 383 is a phosphoserine (S383). Residues 503 to 602 (HADCQGWLYK…WLNKLGSAVI (100 aa)) form the PH domain. Disordered stretches follow at residues 605 to 687 (ESTT…PDTV), 735 to 770 (LSSDDTSSLSSNHDHLTVPDKPAGSKIMDKEETKVS), and 868 to 899 (QQQRASPAPDDTDDTPQELKKSPSSPSVENSI). The span at 613 to 624 (CYSESEQEDPEI) shows a compositional bias: acidic residues. Positions 634–662 (ASQTQSLTAQQASSSSPSLSGTSYSFSSL) are enriched in low complexity. Residues 663–676 (ENTVKTPSSFPSSL) show a composition bias toward polar residues. Over residues 735–745 (LSSDDTSSLSS) the composition is skewed to low complexity. The span at 761-770 (IMDKEETKVS) shows a compositional bias: basic and acidic residues. The required for interaction with CYTH2 stretch occupies residues 851 to 899 (KYREWKVMNTLLIQDIYQQQRASPAPDDTDDTPQELKKSPSSPSVENSI). S873 carries the phosphoserine modification. Residues 889–899 (SPSSPSVENSI) are compositionally biased toward polar residues.

Belongs to the CNKSR family.

Functionally, required for hepatocyte growth factor (HGF)-dependent activation of Arf6 and HGF-stimulated cell migration. This Homo sapiens (Human) protein is CNK3/IPCEF1 fusion protein (CNK3/IPCEF1).